The chain runs to 276 residues: N-acetylmuramoyl-L-alanine amidase AmiD (276 aa).

A signal peptide spans 1-16; it reads MRRFFWLVAAALLLAG. Residue cysteine 17 is the site of N-palmitoyl cysteine attachment. Cysteine 17 is lipidated: S-diacylglycerol cysteine. The N-acetylmuramoyl-L-alanine amidase domain occupies 42–179; the sequence is PRIKVLVIHY…APQRKDDPGP (138 aa). A Zn(2+)-binding site is contributed by histidine 50. 51–52 is a substrate binding site; the sequence is YT. Catalysis depends on glutamate 119, which acts as the Proton acceptor. Residues histidine 166 and aspartate 176 each coordinate Zn(2+).

The protein belongs to the N-acetylmuramoyl-L-alanine amidase 2 family. Zn(2+) serves as cofactor.

Its subcellular location is the cell outer membrane. It carries out the reaction Hydrolyzes the link between N-acetylmuramoyl residues and L-amino acid residues in certain cell-wall glycopeptides.. The polypeptide is N-acetylmuramoyl-L-alanine amidase AmiD (amiD) (Escherichia coli (strain K12)).